A 209-amino-acid polypeptide reads, in one-letter code: Kynurenine formamidase (209 aa).

Trp19 contributes to the substrate binding site. Residues His49, His53, and Asp55 each contribute to the Zn(2+) site. His59 acts as the Proton donor/acceptor in catalysis. Residues His160 and Glu172 each contribute to the Zn(2+) site.

Belongs to the Cyclase 1 superfamily. KynB family. In terms of assembly, homodimer. It depends on Zn(2+) as a cofactor.

The enzyme catalyses N-formyl-L-kynurenine + H2O = L-kynurenine + formate + H(+). It participates in amino-acid degradation; L-tryptophan degradation via kynurenine pathway; L-kynurenine from L-tryptophan: step 2/2. Catalyzes the hydrolysis of N-formyl-L-kynurenine to L-kynurenine, the second step in the kynurenine pathway of tryptophan degradation. This chain is Kynurenine formamidase, found in Ralstonia nicotianae (strain ATCC BAA-1114 / GMI1000) (Ralstonia solanacearum).